The chain runs to 154 residues: Snaclec salmorin subunit A (154 aa).

A signal peptide spans 1–23; it reads MGRFIFVSFGLLVVFLSLSGTGA. Cystine bridges form between C27–C38, C55–C152, and C127–C144. Residues 34–153 enclose the C-type lectin domain; the sequence is NNGHCYQAFN…CGQRNPFVCE (120 aa). Residues S66, E68, and E72 each coordinate Ca(2+). E153 contacts Ca(2+).

It belongs to the snaclec family. Heterodimer of subunits A and B; disulfide-linked. As to expression, expressed by the venom gland.

It localises to the secreted. Its function is as follows. Inhibits thrombin-induced fibrinogen clotting and factor Xa-induced prothrombin activation. Binds to thrombin and prothrombin exosites. The polypeptide is Snaclec salmorin subunit A (Gloydius brevicauda (Korean slamosa snake)).